We begin with the raw amino-acid sequence, 209 residues long: Uracil phosphoribosyltransferase (209 aa).

Residues arginine 79, arginine 104, and 131-139 (DPMLATGGS) contribute to the 5-phospho-alpha-D-ribose 1-diphosphate site. Residues isoleucine 194 and 199–201 (GDA) each bind uracil. A 5-phospho-alpha-D-ribose 1-diphosphate-binding site is contributed by aspartate 200.

This sequence belongs to the UPRTase family. Homodimer. Mg(2+) serves as cofactor.

The enzyme catalyses UMP + diphosphate = 5-phospho-alpha-D-ribose 1-diphosphate + uracil. Its pathway is pyrimidine metabolism; UMP biosynthesis via salvage pathway; UMP from uracil: step 1/1. Allosterically activated by GTP. Catalyzes the conversion of uracil and 5-phospho-alpha-D-ribose 1-diphosphate (PRPP) to UMP and diphosphate. The polypeptide is Uracil phosphoribosyltransferase (Bacillus caldolyticus).